The following is a 129-amino-acid chain: Ribosome-binding factor A (129 aa).

This sequence belongs to the RbfA family. Monomer. Binds 30S ribosomal subunits, but not 50S ribosomal subunits or 70S ribosomes.

Its subcellular location is the cytoplasm. Functionally, one of several proteins that assist in the late maturation steps of the functional core of the 30S ribosomal subunit. Associates with free 30S ribosomal subunits (but not with 30S subunits that are part of 70S ribosomes or polysomes). Required for efficient processing of 16S rRNA. May interact with the 5'-terminal helix region of 16S rRNA. This is Ribosome-binding factor A from Pseudomonas aeruginosa (strain UCBPP-PA14).